The primary structure comprises 306 residues: Protein-methionine-sulfoxide reductase catalytic subunit MsrP (306 aa).

Residues 1-45 (MLIRHAPDLTDNDVTDHSLYLKRRTLMAGVAGLGVAGASASHAQA) constitute a signal peptide (tat-type signal). Mo-molybdopterin is bound by residues N69, 72-73 (YE), C127, T162, N210, R215, and 226-228 (GIK).

The protein belongs to the MsrP family. In terms of assembly, heterodimer of a catalytic subunit (MsrP) and a heme-binding subunit (MsrQ). It depends on Mo-molybdopterin as a cofactor. In terms of processing, predicted to be exported by the Tat system. The position of the signal peptide cleavage has not been experimentally proven.

Its subcellular location is the periplasm. The catalysed reaction is L-methionyl-[protein] + a quinone + H2O = L-methionyl-(S)-S-oxide-[protein] + a quinol. The enzyme catalyses L-methionyl-[protein] + a quinone + H2O = L-methionyl-(R)-S-oxide-[protein] + a quinol. In terms of biological role, part of the MsrPQ system that repairs oxidized periplasmic proteins containing methionine sulfoxide residues (Met-O), using respiratory chain electrons. Thus protects these proteins from oxidative-stress damage caused by reactive species of oxygen and chlorine generated by the host defense mechanisms. MsrPQ is essential for the maintenance of envelope integrity under bleach stress, rescuing a wide series of structurally unrelated periplasmic proteins from methionine oxidation. The catalytic subunit MsrP is non-stereospecific, being able to reduce both (R-) and (S-) diastereoisomers of methionine sulfoxide. This chain is Protein-methionine-sulfoxide reductase catalytic subunit MsrP, found in Caulobacter vibrioides (strain ATCC 19089 / CIP 103742 / CB 15) (Caulobacter crescentus).